Consider the following 384-residue polypeptide: DNA repair protein RAD51 homolog 2 (384 aa).

Residues 1 to 75 (MGSKKLKRVG…TAYGIKAQRS (75 aa)) form an interaction with RAD51C region. 108 to 115 (GPPGCGKT) is an ATP binding site.

This sequence belongs to the RecA family. RAD51 subfamily. As to quaternary structure, part of the BCDX2 complex consisting of RAD51B, RAD51C, RAD51D and XRCC2; the complex has a ring-like structure arranged into a flat disc around a central channel. The BCDX2 subcomplex RAD51B:RAD51C interacts with RAD51. Interacts with SWSAP1; involved in homologous recombination repair. Interacts with HELQ. Phosphorylated on tyrosine residues by BCR-ABL. As to expression, expressed in a wide range of tissues.

The protein resides in the nucleus. Involved in the homologous recombination repair (HRR) pathway of double-stranded DNA breaks arising during DNA replication or induced by DNA-damaging agents. May promote the assembly of presynaptic RAD51 nucleoprotein filaments. Binds single-stranded DNA and double-stranded DNA and has DNA-dependent ATPase activity. Part of the RAD51 paralog protein complex BCDX2 which acts in the BRCA1-BRCA2-dependent HR pathway. Upon DNA damage, BCDX2 acts downstream of BRCA2 recruitment and upstream of RAD51 recruitment. BCDX2 binds predominantly to the intersection of the four duplex arms of the Holliday junction and to junction of replication forks. The BCDX2 complex was originally reported to bind single-stranded DNA, single-stranded gaps in duplex DNA and specifically to nicks in duplex DNA. The BCDX2 subcomplex RAD51B:RAD51C exhibits single-stranded DNA-dependent ATPase activity suggesting an involvement in early stages of the HR pathway. The polypeptide is DNA repair protein RAD51 homolog 2 (RAD51B) (Homo sapiens (Human)).